A 118-amino-acid chain; its full sequence is Holo-[acyl-carrier-protein] synthase (118 aa).

Asp-8 and Glu-58 together coordinate Mg(2+).

The protein belongs to the P-Pant transferase superfamily. AcpS family. It depends on Mg(2+) as a cofactor.

The protein localises to the cytoplasm. The catalysed reaction is apo-[ACP] + CoA = holo-[ACP] + adenosine 3',5'-bisphosphate + H(+). Its function is as follows. Transfers the 4'-phosphopantetheine moiety from coenzyme A to a Ser of acyl-carrier-protein. This is Holo-[acyl-carrier-protein] synthase from Streptococcus pyogenes serotype M1.